Reading from the N-terminus, the 446-residue chain is Exodeoxyribonuclease 7 large subunit (446 aa).

It belongs to the XseA family. As to quaternary structure, heterooligomer composed of large and small subunits.

It localises to the cytoplasm. The enzyme catalyses Exonucleolytic cleavage in either 5'- to 3'- or 3'- to 5'-direction to yield nucleoside 5'-phosphates.. Its function is as follows. Bidirectionally degrades single-stranded DNA into large acid-insoluble oligonucleotides, which are then degraded further into small acid-soluble oligonucleotides. The sequence is that of Exodeoxyribonuclease 7 large subunit from Shewanella denitrificans (strain OS217 / ATCC BAA-1090 / DSM 15013).